Reading from the N-terminus, the 170-residue chain is Adenine phosphoribosyltransferase (170 aa).

Belongs to the purine/pyrimidine phosphoribosyltransferase family. As to quaternary structure, homodimer.

It localises to the cytoplasm. The enzyme catalyses AMP + diphosphate = 5-phospho-alpha-D-ribose 1-diphosphate + adenine. The protein operates within purine metabolism; AMP biosynthesis via salvage pathway; AMP from adenine: step 1/1. Functionally, catalyzes a salvage reaction resulting in the formation of AMP, that is energically less costly than de novo synthesis. The protein is Adenine phosphoribosyltransferase of Thermotoga petrophila (strain ATCC BAA-488 / DSM 13995 / JCM 10881 / RKU-1).